A 224-amino-acid chain; its full sequence is UPF0758 protein VV1_0825 (224 aa).

Positions 1–20 (MSLKNLPSESMPREKLLQRG) are disordered. The region spanning 102–224 (ALTSPQHTKL…VVSFAERGWI (123 aa)) is the MPN domain. The Zn(2+) site is built by H173, H175, and D186. The JAMM motif signature appears at 173–186 (HNHPSGVAEPSQAD).

It belongs to the UPF0758 family.

The chain is UPF0758 protein VV1_0825 from Vibrio vulnificus (strain CMCP6).